The chain runs to 434 residues: MAGEVEGRGCGFSLGVLVTLLVLPLPSLCTLSTEKELHVIKLYEGRMVRYNESRNFCYQRTYEPKWSDVWTKIQIRINSTKMIRVTQVDNEEKLKEMETFNMFDFFSSFLKEKLNDTFIYVNLYSNKTCVKVHLTDTDTYYSVALSRGFDPRLFFVFLCGLLLFFYGDTLSRSQLFFYSTGITVGMLASMLILVFMLSKLMPKKSPFFALLLGGWSVSIYVIQLVFRNLQAICSEYWQYLIVYLGIVGFVSFAFCYIYGPLENERSINILNWTLQLIGLLLMYVSVQIQHIAVTIVVIAFCTKQIEYPVQWIYILYRKIKLKRAKPGPPRLLTEEEYRKQADVETRKALEELRECCSSPDFAAWKTISRIQSPKRFADFVEGSSHLTPNEVSVHEHEYGLGGSFLEDELFGEDSDVEEEMEIEPPLYPIPRSVF.

The first 29 residues, 1–29 (MAGEVEGRGCGFSLGVLVTLLVLPLPSLC), serve as a signal peptide directing secretion. 5 helical membrane passes run 151–171 (PRLF…DTLS), 175–195 (LFFY…ILVF), 206–226 (PFFA…QLVF), 239–259 (YLIV…YIYG), and 280–300 (LLMY…VIAF). The interval 176-287 (FFYSTGITVG…GLLLMYVSVQ (112 aa)) is a; required for its colocalization with lamins at the nuclear envelope. A Nuclear localization signal motif is present at residues 317–325 (RKIKLKRAK). Residues 326-395 (PGPPRLLTEE…LTPNEVSVHE (70 aa)) are b; interaction with ran. Positions 326–434 (PGPPRLLTEE…PLYPIPRSVF (109 aa)) are interaction with banf1-a and banf1-b. Positions 368 to 375 (SRIQSPKR) are BAF-binding site (BBS); essential for interaction with banf1-a, banf1-b and ran.

Belongs to the NEMP family. Interacts with banf1-a and banf1-b. Interacts with ran-gtp. In terms of processing, phosphorylated.

It is found in the nucleus inner membrane. The protein localises to the nucleus envelope. Its function is as follows. In concert with ran, required for proper eye development. May be involved in the expression of early eye marker genes. Contributes to nuclear envelope stiffness in germ cells. Required for fertility. Essential for normal erythropoiesis. Required for efficient nuclear envelope opening and enucleation during the late stages of erythroblast maturation. In Xenopus laevis (African clawed frog), this protein is Nuclear envelope integral membrane protein 1b (nemp1b).